We begin with the raw amino-acid sequence, 151 residues long: Methylglyoxal synthase (151 aa).

The region spanning 1-151 (MKKTTRTMAA…DYQAYLAERT (151 aa)) is the MGS-like domain. Residues His19, Lys23, 45–48 (TGTT), and 65–66 (SG) contribute to the substrate site. The Proton donor/acceptor role is filled by Asp71. Substrate is bound at residue His98.

It belongs to the methylglyoxal synthase family.

It catalyses the reaction dihydroxyacetone phosphate = methylglyoxal + phosphate. In terms of biological role, catalyzes the formation of methylglyoxal from dihydroxyacetone phosphate. The chain is Methylglyoxal synthase from Vibrio cholerae serotype O1 (strain ATCC 39541 / Classical Ogawa 395 / O395).